The following is a 397-amino-acid chain: Putative odorant receptor 83c (397 aa).

At Met-1 to Arg-39 the chain is on the cytoplasmic side. The chain crosses the membrane as a helical span at residues Thr-40–Asn-60. Residues Asn-61 to Lys-70 lie on the Extracellular side of the membrane. Residues Ala-71–Leu-90 form a helical membrane-spanning segment. Residues Lys-91–Asn-136 lie on the Cytoplasmic side of the membrane. The chain crosses the membrane as a helical span at residues Gly-137–Gly-157. Residues Thr-158–Thr-186 are Extracellular-facing. The chain crosses the membrane as a helical span at residues Val-187–Leu-207. The Cytoplasmic segment spans residues Thr-208–Gln-282. A helical transmembrane segment spans residues Val-283 to Ser-299. Residues Ser-300 to Ser-305 are Extracellular-facing. Residues Ala-306–Leu-326 form a helical membrane-spanning segment. The Cytoplasmic segment spans residues Glu-327–Asn-365. Residues Ile-366–Ile-386 form a helical membrane-spanning segment. Residues Tyr-387–Ala-397 lie on the Extracellular side of the membrane.

The protein belongs to the insect chemoreceptor superfamily. Heteromeric odorant receptor channel (TC 1.A.69) family. Or67d subfamily. In terms of assembly, interacts with Orco. Complexes exist early in the endomembrane system in olfactory sensory neurons (OSNs), coupling these complexes to the conserved ciliary trafficking pathway. As to expression, expressed in olfactory sensory neurons in the antenna.

It is found in the cell membrane. Its function is as follows. Odorant receptor which mediates acceptance or avoidance behavior, depending on its substrates. The odorant receptor repertoire encodes a large collection of odor stimuli that vary widely in identity, intensity, and duration. May form a complex with Orco to form odorant-sensing units, providing sensitive and prolonged odorant signaling and calcium permeability. The chain is Putative odorant receptor 83c (Or83c) from Drosophila melanogaster (Fruit fly).